We begin with the raw amino-acid sequence, 472 residues long: Fumarate hydratase class II (472 aa).

Residues 1 to 20 form a disordered region; that stretch reads MSPHENPSVETRTESDTFGP. Residues 105 to 107, 136 to 139, 146 to 148, and T194 contribute to the substrate site; these read SGT, HPND, and SSN. Positions 127-149 are disordered; it reads GKRGGKSPVHPNDHCNRGQSSND. The active-site Proton donor/acceptor is the H195. S325 is an active-site residue. Substrate-binding positions include S326 and 331–333; that span reads KVN.

Belongs to the class-II fumarase/aspartase family. Fumarase subfamily. Homotetramer.

The protein localises to the cytoplasm. It catalyses the reaction (S)-malate = fumarate + H2O. The protein operates within carbohydrate metabolism; tricarboxylic acid cycle; (S)-malate from fumarate: step 1/1. Involved in the TCA cycle. Catalyzes the stereospecific interconversion of fumarate to L-malate. This Methylorubrum extorquens (strain ATCC 14718 / DSM 1338 / JCM 2805 / NCIMB 9133 / AM1) (Methylobacterium extorquens) protein is Fumarate hydratase class II.